Reading from the N-terminus, the 496-residue chain is Palmitoleoyl-protein carboxylesterase NOTUM (496 aa).

The first 19 residues, 1–19, serve as a signal peptide directing secretion; it reads MGRGVRVLLLLSLLHCAGG. The disordered stretch occupies residues 21 to 46; the sequence is EGRKTWRRRGQQPPPPPRTEAAPAAG. Ser-81 carries the phosphoserine; by FAM20C modification. Residue Asn-96 is glycosylated (N-linked (GlcNAc...) asparagine). Catalysis depends on charge relay system residues Ser-232, Asp-340, and His-389.

The protein belongs to the pectinacetylesterase family. Notum subfamily. Rarely expressed in adult normal tissues.

The protein localises to the secreted. It catalyses the reaction [Wnt protein]-O-(9Z)-hexadecenoyl-L-serine + H2O = [Wnt protein]-L-serine + (9Z)-hexadecenoate + H(+). Carboxylesterase that acts as a key negative regulator of the Wnt signaling pathway by specifically mediating depalmitoleoylation of WNT proteins. Serine palmitoleoylation of WNT proteins is required for efficient binding to frizzled receptors. This Homo sapiens (Human) protein is Palmitoleoyl-protein carboxylesterase NOTUM.